The sequence spans 74 residues: Large ribosomal subunit protein bL31 (74 aa).

Zn(2+) contacts are provided by Cys16, Cys18, Cys38, and Cys41.

It belongs to the bacterial ribosomal protein bL31 family. Type A subfamily. As to quaternary structure, part of the 50S ribosomal subunit. Zn(2+) serves as cofactor.

In terms of biological role, binds the 23S rRNA. The protein is Large ribosomal subunit protein bL31 (rpmE) of Streptomyces coelicolor (strain ATCC BAA-471 / A3(2) / M145).